Reading from the N-terminus, the 483-residue chain is Low-density lipoprotein receptor-related protein 11 (483 aa).

An N-terminal signal peptide occupies residues 1 to 32 (MATRGGGPGPGFRHRALRGLLLLCLWLPGSRP). Over 33–433 (GEPAAPSSGV…GGEHPAPEAG (401 aa)) the chain is Extracellular. Positions 85–172 (AVPDTIIRTQ…FAPLRGYRTY (88 aa)) constitute an MANSC domain. 2 N-linked (GlcNAc...) asparagine glycosylation sites follow: N152 and N275. Residues 193-287 (PVSKAGKDVV…VTVLPRPYST (95 aa)) form the PKD domain. In terms of domain architecture, LDL-receptor class A spans 293 to 329 (ACSRYHFFCDSGCCIDIALACDGVRQCPDGSDEDFCQ). 3 cysteine pairs are disulfide-bonded: C294–C306, C301–C319, and C313–C328. The tract at residues 346–428 (AQPGAMGLNE…KSGQAGGEHP (83 aa)) is disordered. Polar residues-rich tracts occupy residues 367–376 (RATTHNQPAT) and 385–407 (HSTQ…SSGK). An N-linked (GlcNAc...) asparagine glycan is attached at N403. Basic and acidic residues predominate over residues 408–418 (NQEEGNYDLKS). A helical transmembrane segment spans residues 434-456 (AVLPLALGLAITVLLLLMVTCRL). Topologically, residues 457–483 (RLVKQKLKKARPITSEESDYLINGMYL) are cytoplasmic. S474 is modified (phosphoserine).

Belongs to the LDLR family.

The protein resides in the membrane. The protein is Low-density lipoprotein receptor-related protein 11 (Lrp11) of Mus musculus (Mouse).